We begin with the raw amino-acid sequence, 595 residues long: Apolipoprotein N-acyltransferase 2 (595 aa).

A run of 5 helical transmembrane segments spans residues 30-50 (FLAFAPVSLTHFVWIAPFGFF), 63-83 (LFFHGLLIGVVFYAISFHWII), 95-115 (VVAILILLFAGLLFGLKFPIF), 167-187 (AEITGVYGISFLVFIVSYTLF), and 210-230 (FITLPALLLLTFIVSGIFLFK). A CN hydrolase domain is found at 241–555 (LNVLIVQPDA…AEALSETIDV (315 aa)). E293 serves as the catalytic Proton acceptor. Residue K372 is part of the active site. C463 serves as the catalytic Nucleophile. Residues 569 to 589 (LIPWLMLFLTGIYYLNLLIGI) form a helical membrane-spanning segment.

This sequence belongs to the CN hydrolase family. Apolipoprotein N-acyltransferase subfamily.

The protein resides in the cell inner membrane. The enzyme catalyses N-terminal S-1,2-diacyl-sn-glyceryl-L-cysteinyl-[lipoprotein] + a glycerophospholipid = N-acyl-S-1,2-diacyl-sn-glyceryl-L-cysteinyl-[lipoprotein] + a 2-acyl-sn-glycero-3-phospholipid + H(+). Its pathway is protein modification; lipoprotein biosynthesis (N-acyl transfer). Functionally, catalyzes the phospholipid dependent N-acylation of the N-terminal cysteine of apolipoprotein, the last step in lipoprotein maturation. The polypeptide is Apolipoprotein N-acyltransferase 2 (Leptospira interrogans serogroup Icterohaemorrhagiae serovar Lai (strain 56601)).